We begin with the raw amino-acid sequence, 278 residues long: Undecaprenyl-diphosphatase (278 aa).

Transmembrane regions (helical) follow at residues 3–23 (YILI…IPIS), 42–62 (VAYS…IIYF), 88–108 (FLVI…LFVI), 112–132 (ILGL…IIIY), 152–172 (IIIV…RSGI), 190–210 (LSFI…VLFS), 225–245 (GLLI…NALL), and 253–273 (VVVL…LSGI).

This sequence belongs to the UppP family.

It is found in the cell membrane. The catalysed reaction is di-trans,octa-cis-undecaprenyl diphosphate + H2O = di-trans,octa-cis-undecaprenyl phosphate + phosphate + H(+). In terms of biological role, catalyzes the dephosphorylation of undecaprenyl diphosphate (UPP). The polypeptide is Undecaprenyl-diphosphatase (Saccharolobus islandicus (strain M.16.4 / Kamchatka #3) (Sulfolobus islandicus)).